The primary structure comprises 651 residues: p-hydroxybenzoic acid efflux pump subunit AaeB (651 aa).

A run of 11 helical transmembrane segments spans residues 11 to 31, 41 to 61, 65 to 85, 91 to 111, 117 to 137, 150 to 170, 367 to 387, 404 to 424, 428 to 448, 454 to 474, and 480 to 500; these read FACK…WFEM, AAIV…SGAI, GLLR…IIMT, VVML…SSLV, YVFA…QSSP, EIIL…PRSV, LFWL…LGVV, FLIG…LVLP, QSLL…GIEI, GSLG…PMTF, and LDNA…IMLI.

Belongs to the aromatic acid exporter ArAE (TC 2.A.85) family.

It is found in the cell inner membrane. Functionally, forms an efflux pump with AaeA. Could function as a metabolic relief valve, allowing to eliminate certain compounds when they accumulate to high levels in the cell. The protein is p-hydroxybenzoic acid efflux pump subunit AaeB of Musicola paradisiaca (strain Ech703) (Dickeya paradisiaca).